The following is a 247-amino-acid chain: Ras-like protein family member 11B (247 aa).

The small GTPase-like stretch occupies residues 29-247; that stretch reads ASSRVIKIAV…SAKVRTATSV (219 aa). Residues 40-47, 87-91, and 152-155 contribute to the GTP site; these read GGSGVGKT, DTPGV, and NKAD. A disordered region spans residues 205 to 228; sequence QNTGTPERRKNSLIPRPKSPNMQD.

The protein belongs to the small GTPase superfamily. Ras family.

The enzyme catalyses GTP + H2O = GDP + phosphate + H(+). The protein is Ras-like protein family member 11B of Xenopus tropicalis (Western clawed frog).